The following is a 105-amino-acid chain: Large ribosomal subunit protein uL24 (105 aa).

It belongs to the universal ribosomal protein uL24 family. In terms of assembly, part of the 50S ribosomal subunit.

In terms of biological role, one of two assembly initiator proteins, it binds directly to the 5'-end of the 23S rRNA, where it nucleates assembly of the 50S subunit. Functionally, one of the proteins that surrounds the polypeptide exit tunnel on the outside of the subunit. This chain is Large ribosomal subunit protein uL24, found in Mycobacterium leprae (strain Br4923).